A 274-amino-acid polypeptide reads, in one-letter code: Large ribosomal subunit protein uL2 (274 aa).

A disordered region spans residues 228–254; sequence VDHPMGGGEGRASGGHPRSRKGLYAKG. The span at 244 to 254 shows a compositional bias: basic residues; it reads PRSRKGLYAKG.

It belongs to the universal ribosomal protein uL2 family. In terms of assembly, part of the 50S ribosomal subunit. Forms a bridge to the 30S subunit in the 70S ribosome.

Its function is as follows. One of the primary rRNA binding proteins. Required for association of the 30S and 50S subunits to form the 70S ribosome, for tRNA binding and peptide bond formation. It has been suggested to have peptidyltransferase activity; this is somewhat controversial. Makes several contacts with the 16S rRNA in the 70S ribosome. The protein is Large ribosomal subunit protein uL2 of Azobacteroides pseudotrichonymphae genomovar. CFP2.